The primary structure comprises 249 residues: Small ribosomal subunit protein uS2 (249 aa).

It belongs to the universal ribosomal protein uS2 family.

The protein is Small ribosomal subunit protein uS2 of Listeria innocua serovar 6a (strain ATCC BAA-680 / CLIP 11262).